A 60-amino-acid chain; its full sequence is Hemocyte defensin Cg-Defh1 (60 aa).

An N-terminal signal peptide occupies residues 1–17 (LFTLVVLLMVSADMAFA). Residues Phe-19, Gly-20, and Cys-21 each contribute to the beta-D-GlcNAc-(1-&gt;4)-Mur2Ac(oyl-L-Ala-gamma-D-Glu-L-Lys-D-Ala-D-Ala)-di-trans,octa-cis-undecaprenyl diphosphate site. 4 cysteine pairs are disulfide-bonded: Cys-21/Cys-42, Cys-28/Cys-51, Cys-32/Cys-53, and Cys-37/Cys-56. The binds to membrane interface stretch occupies residues 22 to 25 (PRDQ). Beta-D-GlcNAc-(1-&gt;4)-Mur2Ac(oyl-L-Ala-gamma-D-Glu-L-Lys-D-Ala-D-Ala)-di-trans,octa-cis-undecaprenyl diphosphate is bound at residue His-31. Residues 43–49 (DAVTLWL) are binds to membrane interface. Cys-51 is a binding site for beta-D-GlcNAc-(1-&gt;4)-Mur2Ac(oyl-L-Ala-gamma-D-Glu-L-Lys-D-Ala-D-Ala)-di-trans,octa-cis-undecaprenyl diphosphate.

It belongs to the invertebrate defensin family. As to expression, expressed in hemocytes.

The protein localises to the secreted. It is found in the target cell membrane. Antibacterial peptide mostly active against Gram-positive bacteria. It acts by selectively inhibiting peptidoglycan biosynthesis through complex formation with the cell wall precursor lipid II (1:1 molar ratio) thus inhibiting cell wall synthesis. It does not disrupt cell membranes. Is noticeably less potent than Cg-Defh2 and Cg-Defm. Shows no or limited activities against Gram-negative bacteria. In Magallana gigas (Pacific oyster), this protein is Hemocyte defensin Cg-Defh1.